The following is a 306-amino-acid chain: MQNEHILKGVKSVERRLTFKDVKAIVKLGLVQGNLIPAFAGAFIAIMLSGRSFLSSIPELLTMLFGTTLIMAGSCALNNFYDQDIDSIMPSKQNRPSVTGKVSTASILQLSLVLMIVGEMLLFTINIETGIIGFLGIFGYVVLYSVWSKRHLVSNTIIGSFPGAIPPLVGYAAIEPSLSSTAWMLFVIMFIWQPAHFYALAIKRSEEYALAGIPMLPSVKGFKRTRLSMLFWVMLLLPTPFFMQELGTVFMVLASVLNLGWLLLAISGFRSNVKENKWAMTMFVYSLNYLMIFFVMIVVVTLIQTI.

The next 9 helical transmembrane spans lie at 28–48 (LGLV…AIML), 53–73 (FLSS…IMAG), 105–125 (ASIL…LFTI), 127–147 (IETG…YSVW), 156–176 (TIIG…AIEP), 182–202 (AWML…ALAI), 227–244 (LSML…FFMQ), 246–266 (LGTV…LLAI), and 283–303 (FVYS…VTLI).

It belongs to the UbiA prenyltransferase family. Protoheme IX farnesyltransferase subfamily. Interacts with CtaA.

It is found in the cell membrane. It catalyses the reaction heme b + (2E,6E)-farnesyl diphosphate + H2O = Fe(II)-heme o + diphosphate. It functions in the pathway porphyrin-containing compound metabolism; heme O biosynthesis; heme O from protoheme: step 1/1. In terms of biological role, converts heme B (protoheme IX) to heme O by substitution of the vinyl group on carbon 2 of heme B porphyrin ring with a hydroxyethyl farnesyl side group. The protein is Protoheme IX farnesyltransferase of Macrococcus caseolyticus (strain JCSC5402) (Macrococcoides caseolyticum).